The sequence spans 122 residues: SLLQFNKMIKFETRKNAVPFYAFYGCYCGWGGRRRPKDATDRCCFVHDCCYEKVTKCNTKWDIYRYSLKSGYITCGKGTWCKEQICECDRVAAECLRRSLSTYKNGYMFYPDSRCRGPSETC.

Intrachain disulfides connect C26–C115, C28–C44, C43–C95, C49–C122, C50–C88, C57–C81, and C75–C86. Positions 27, 29, and 31 each coordinate Ca(2+). H47 is a catalytic residue. D48 is a Ca(2+) binding site. D89 is an active-site residue.

Belongs to the phospholipase A2 family. Group II subfamily. D49 sub-subfamily. Ca(2+) serves as cofactor. As to expression, expressed by the venom gland.

The protein localises to the secreted. It carries out the reaction a 1,2-diacyl-sn-glycero-3-phosphocholine + H2O = a 1-acyl-sn-glycero-3-phosphocholine + a fatty acid + H(+). With respect to regulation, pre-incubation with heparin markedly reduces the neurotoxicity of this toxin. In terms of biological role, snake venom phospholipase A2 (PLA2) that produces neuromuscular blockade in chick biventer cervicis preparations in the absence and presence of crotapotin. In contrast, in mouse phrenic nerve-diaphragm preparations, the neuromuscular blockade is dependent on crotapotin. PLA2 catalyzes the calcium-dependent hydrolysis of the 2-acyl groups in 3-sn-phosphoglycerides. This is Basic phospholipase A2 F16 from Crotalus durissus terrificus (South American rattlesnake).